We begin with the raw amino-acid sequence, 196 residues long: ATP-dependent Clp protease proteolytic subunit (196 aa).

The Nucleophile role is filled by serine 101. The active site involves histidine 126.

The protein belongs to the peptidase S14 family. Component of the chloroplastic Clp protease core complex.

The protein localises to the plastid. The protein resides in the chloroplast stroma. The catalysed reaction is Hydrolysis of proteins to small peptides in the presence of ATP and magnesium. alpha-casein is the usual test substrate. In the absence of ATP, only oligopeptides shorter than five residues are hydrolyzed (such as succinyl-Leu-Tyr-|-NHMec, and Leu-Tyr-Leu-|-Tyr-Trp, in which cleavage of the -Tyr-|-Leu- and -Tyr-|-Trp bonds also occurs).. In terms of biological role, cleaves peptides in various proteins in a process that requires ATP hydrolysis. Has a chymotrypsin-like activity. Plays a major role in the degradation of misfolded proteins. This chain is ATP-dependent Clp protease proteolytic subunit, found in Lobularia maritima (Sweet alyssum).